The sequence spans 391 residues: Alkanesulfonate monooxygenase (391 aa).

This sequence belongs to the SsuD family.

It carries out the reaction an alkanesulfonate + FMNH2 + O2 = an aldehyde + FMN + sulfite + H2O + 2 H(+). Its function is as follows. Catalyzes the desulfonation of aliphatic sulfonates. The sequence is that of Alkanesulfonate monooxygenase from Rhodopseudomonas palustris (strain ATCC BAA-98 / CGA009).